The primary structure comprises 295 residues: Probable cell division protein WhiA (295 aa).

The segment at residues 262–293 (SLRELGKKLNLTKSQIYSKLKRIIKIAERFGD) is a DNA-binding region (H-T-H motif).

This sequence belongs to the WhiA family.

Its function is as follows. Involved in cell division and chromosome segregation. The sequence is that of Probable cell division protein WhiA from Thermotoga maritima (strain ATCC 43589 / DSM 3109 / JCM 10099 / NBRC 100826 / MSB8).